The sequence spans 1486 residues: MIERGKFRSLTLINWNGFFARTFDLDELVTTLSGGNGAGKSTTMAAFVTALIPDLTLLHFRNTTEAGATSGSRDKGLHGKLKAGVCYSMLDTINSRHQRVVVGVRLQQVAGRDRKVDIKPFAIQGLPMSVQPTQLVTETLNERQARVLPLNELKDKLEAMEGVQFKQFNSITDYHSLMFDLGIIARRLRSASDRSKFYRLIEASLYGGISSAITRSLRDYLLPENSGVRKAFQDMEAALRENRMTLEAIRVTQSDRDLFKHLISEATNYVAADYMRHANERRVHLDKALEFRRELHTSRQQLAAEQYKHVDMARELAEHNGAEGDLEADYQAASDHLNLVQTAQRQQEKIERYEADLDELQIRLEEQNEVVAEAIERQEENEARAEAAELEVDELKSQLADYQQALDVQQTRAIQYNQAIAALNRAKELCHLPDLTADSAAEWLETFQAKEQEATEKMLSLEQKMSMAQTAHSQFEQAYQLVVAINGPLARNEAWDVARELLREGVDQRHLAEQVQPLRMRLSELEQRLREQQEAERLLADFCKRQGKNFDIDELEALHQELEARIASLSDSVSNAREERMALRQEQEQLQSRIQSLMQRAPVWLAAQNSLNQLSEQCGEEFTSSQDVTEYLQQLLEREREAIVERDEVGARKNAVDEEIERLSQPGGSEDQRLNALAERFGGVLLSEIYDDVSLEDAPYFSALYGPSRHAIVVPDLSQVTEHLEGLTDCPEDLYLIEGDPQSFDDSVFSVDELEKAVVVKIADRQWRYSRFPEVPLFGRAARESRIESLHAEREVLSERFATLSFDVQKTQRLHQAFSRFIGSHLAVAFESDPEAEIRQLNSRRVELERALSNHENDNQQQRIQFEQAKEGVTALNRILPRLNLLADDSLADRVDEIRERLDEAQEAARFVQQFGNQLAKLEPIVSVLQSDPEQFEQLKEDYAYSQQMQRDARQQAFALTEVVQRRAHFSYSDSAEMLSGNSDLNEKLRERLEQAEAERTRAREALRGHAAQLSQYNQVLASLKSSYDTKKELLNDLQRELQDIGVRADSGAEERARIRRDELHAQLSNNRSRRNQLEKALTFCEAEMDNLTRKLRKLERDYFEMREQVVTAKAGWCAVMRMVKDNVVERRLHRRELAYLSADDLRSMSDKALGALRLAVADNEHLRDVLRMSEDPKRPERKIQFFVAVYQHLRERIRQDIIRTDDPVEAIEQMEIELSRLTEELTSREQKLAISSRSVANIIRKTIQREQNRIRMLNQGLQNVSFGQVNSVRLNVNVRETHAMLLDVLSEQHEQHQDLFNSNRLTFSEALAKLYQRLNPQIDMGQRTPQTIGEELLDYRNYLEMEVEVNRGSDGWLRAESGALSTGEAIGTGMSILVMVVQSWEDESRRLRGKDISPCRLLFLDEAARLDARSIATLFELCERLQMQLIIAAPENISPEKGTTYKLVRKVFQNTEHVHVVGLRGFAPQLPETLPGSDEAPSQES.

34–41 (GGNGAGKS) contacts ATP. Coiled-coil stretches lie at residues 334–418 (SDHL…QYNQ), 444–480 (LETFQAKEQEATEKMLSLEQKMSMAQTAHSQFEQAYQ), and 509–603 (RHLA…RAPV). The tract at residues 666 to 783 (PGGSEDQRLN…EVPLFGRAAR (118 aa)) is flexible hinge. Coiled-coil stretches lie at residues 835–923 (EAEI…AKLE), 977–1115 (EMLS…TAKA), and 1209–1266 (VEAI…QNVS).

The protein belongs to the SMC family. MukB subfamily. As to quaternary structure, homodimerization via its hinge domain. Binds to DNA via its C-terminal region. Interacts, and probably forms a ternary complex, with MukE and MukF via its C-terminal region. The complex formation is stimulated by calcium or magnesium. Interacts with tubulin-related protein FtsZ.

It is found in the cytoplasm. The protein localises to the nucleoid. Functionally, plays a central role in chromosome condensation, segregation and cell cycle progression. Functions as a homodimer, which is essential for chromosome partition. Involved in negative DNA supercoiling in vivo, and by this means organize and compact chromosomes. May achieve or facilitate chromosome segregation by condensation DNA from both sides of a centrally located replisome during cell division. The chain is Chromosome partition protein MukB from Shigella sonnei (strain Ss046).